The primary structure comprises 127 residues: Large ribosomal subunit protein uL22 (127 aa).

Low complexity predominate over residues 106–117 (GAPEGVPVGGAV). Residues 106–127 (GAPEGVPVGGAVDTPGDEEEEE) are disordered.

The protein belongs to the universal ribosomal protein uL22 family. In terms of assembly, part of the 50S ribosomal subunit.

This protein binds specifically to 23S rRNA; its binding is stimulated by other ribosomal proteins, e.g. L4, L17, and L20. It is important during the early stages of 50S assembly. It makes multiple contacts with different domains of the 23S rRNA in the assembled 50S subunit and ribosome. Its function is as follows. The globular domain of the protein is located near the polypeptide exit tunnel on the outside of the subunit, while an extended beta-hairpin is found that lines the wall of the exit tunnel in the center of the 70S ribosome. In Rubrobacter xylanophilus (strain DSM 9941 / JCM 11954 / NBRC 16129 / PRD-1), this protein is Large ribosomal subunit protein uL22.